Consider the following 556-residue polypeptide: Small ribosomal subunit protein bS1 (556 aa).

S1 motif domains lie at Thr35–Gln105, Asn120–Lys183, Thr204–Lys272, Gly289–Lys359, Asp377–Lys444, and Asp461–His525.

It belongs to the bacterial ribosomal protein bS1 family.

In terms of biological role, binds mRNA; thus facilitating recognition of the initiation point. It is needed to translate mRNA with a short Shine-Dalgarno (SD) purine-rich sequence. The sequence is that of Small ribosomal subunit protein bS1 (rpsA) from Helicobacter pylori (strain ATCC 700392 / 26695) (Campylobacter pylori).